The following is a 418-amino-acid chain: Glutamyl-tRNA reductase (418 aa).

Substrate contacts are provided by residues 49–52, Ser-105, 110–112, and Gln-116; these read TCNR and EPQ. Cys-50 functions as the Nucleophile in the catalytic mechanism. Residue 185–190 participates in NADP(+) binding; sequence GAGEMI.

Belongs to the glutamyl-tRNA reductase family. Homodimer.

It carries out the reaction (S)-4-amino-5-oxopentanoate + tRNA(Glu) + NADP(+) = L-glutamyl-tRNA(Glu) + NADPH + H(+). Its pathway is porphyrin-containing compound metabolism; protoporphyrin-IX biosynthesis; 5-aminolevulinate from L-glutamyl-tRNA(Glu): step 1/2. Catalyzes the NADPH-dependent reduction of glutamyl-tRNA(Glu) to glutamate 1-semialdehyde (GSA). This Aromatoleum aromaticum (strain DSM 19018 / LMG 30748 / EbN1) (Azoarcus sp. (strain EbN1)) protein is Glutamyl-tRNA reductase.